The sequence spans 168 residues: MTANTTPGKAFPVSWDQFHRDCRALTWRLNETGPFHAVVAITRGGLVPAAIVARELGVRVIDTVCIVSYDHNQKSELKVLKDISDATAKLGGGTGKGLLIVDDLVDTGATARVVRAMIPDAHFAAVYAKPLGKPLVDTFITEVSQDTWIYFPWDLDLAFAPPLRDGAA.

Residues 43–44 and 102–110 each bind 5-phospho-alpha-D-ribose 1-diphosphate; these read RG and DDLVDTGAT. Asp103 lines the Mg(2+) pocket. Residues Asp106 and Ile149 each contribute to the guanine site. Residues Asp106 and Ile149 each coordinate xanthine. GMP contacts are provided by residues 106 to 110 and 148 to 149; these read DTGAT and WI.

Belongs to the purine/pyrimidine phosphoribosyltransferase family. XGPT subfamily. As to quaternary structure, homotetramer. Mg(2+) serves as cofactor.

The protein localises to the cell inner membrane. The enzyme catalyses GMP + diphosphate = guanine + 5-phospho-alpha-D-ribose 1-diphosphate. The catalysed reaction is XMP + diphosphate = xanthine + 5-phospho-alpha-D-ribose 1-diphosphate. It carries out the reaction IMP + diphosphate = hypoxanthine + 5-phospho-alpha-D-ribose 1-diphosphate. Its pathway is purine metabolism; GMP biosynthesis via salvage pathway; GMP from guanine: step 1/1. It participates in purine metabolism; XMP biosynthesis via salvage pathway; XMP from xanthine: step 1/1. Purine salvage pathway enzyme that catalyzes the transfer of the ribosyl-5-phosphate group from 5-phospho-alpha-D-ribose 1-diphosphate (PRPP) to the N9 position of the 6-oxopurines guanine and xanthine to form the corresponding ribonucleotides GMP (guanosine 5'-monophosphate) and XMP (xanthosine 5'-monophosphate), with the release of PPi. To a lesser extent, also acts on hypoxanthine. The polypeptide is Xanthine-guanine phosphoribosyltransferase (Nitrobacter hamburgensis (strain DSM 10229 / NCIMB 13809 / X14)).